The following is a 142-amino-acid chain: Large ribosomal subunit protein uL11 (142 aa).

Belongs to the universal ribosomal protein uL11 family. Part of the ribosomal stalk of the 50S ribosomal subunit. Interacts with L10 and the large rRNA to form the base of the stalk. L10 forms an elongated spine to which L12 dimers bind in a sequential fashion forming a multimeric L10(L12)X complex. One or more lysine residues are methylated.

In terms of biological role, forms part of the ribosomal stalk which helps the ribosome interact with GTP-bound translation factors. The polypeptide is Large ribosomal subunit protein uL11 (Buchnera aphidicola subsp. Schizaphis graminum (strain Sg)).